We begin with the raw amino-acid sequence, 226 residues long: Protein FATTY ACID EXPORT 1, chloroplastic (226 aa).

The transit peptide at 1 to 39 (MASQISQLACFSSTNRQFHFQSRSFPCPMIRPQSFVVKS) directs the protein to the chloroplast. Residues 66–87 (SKPYSTVDETATNKESITEPVE) are disordered. Polar residues predominate over residues 67–80 (KPYSTVDETATNKE). 3 helical membrane passes run 130–150 (LSTG…SLKI), 158–178 (FPYI…NFTA), and 186–206 (FPAG…SYVV).

This sequence belongs to the TMEM14 family. Expressed in cotyledons, leaves, sepals and pollen.

It is found in the plastid. It localises to the chloroplast inner membrane. Functionally, mediates the export of free fatty acid from the plastids. Potentially prefers palmitic acid (C16:0) over oleic acid (C18:1) and stearic acid (C18:0). Not involved in fatty acid activation. Required for biogenesis of the outer pollen cell wall, in particular for the assembly of exine and pollen coat and for the release of ketone wax components. The chain is Protein FATTY ACID EXPORT 1, chloroplastic from Arabidopsis thaliana (Mouse-ear cress).